A 370-amino-acid polypeptide reads, in one-letter code: Cysteine synthase 1 (370 aa).

A mitochondrion-targeting transit peptide spans 1–16 (MFRQSVRRFATAALRS). Lys73 is modified (N6-(pyridoxal phosphate)lysine). Pyridoxal 5'-phosphate-binding positions include Asn103, 209–213 (GTGGT), and Ser308.

The protein belongs to the cysteine synthase/cystathionine beta-synthase family. Requires pyridoxal 5'-phosphate as cofactor.

The protein localises to the mitochondrion. The enzyme catalyses O-succinyl-L-serine + hydrogen sulfide = L-cysteine + succinate. It carries out the reaction O-acetyl-L-serine + hydrogen sulfide = L-cysteine + acetate. Its pathway is amino-acid biosynthesis; L-cysteine biosynthesis; L-cysteine from L-serine: step 2/2. In terms of biological role, catalyzes the conversion of O-succinyl-L-serine into cysteine, the last step in the cysteine biosynthesis pathway. Can also use O-acetyl-L-serine. The polypeptide is Cysteine synthase 1 (Emericella nidulans (strain FGSC A4 / ATCC 38163 / CBS 112.46 / NRRL 194 / M139) (Aspergillus nidulans)).